The chain runs to 345 residues: Platelet-derived growth factor C (345 aa).

The first 22 residues, Met-1 to Ala-22, serve as a signal peptide directing secretion. Residues Asn-25 and Asn-55 are each glycosylated (N-linked (GlcNAc...) asparagine). Residues His-46 to Leu-163 enclose the CUB domain. Disulfide bonds link Cys-104–Cys-124, Cys-250–Cys-294, Cys-280–Cys-335, and Cys-287–Cys-337.

It belongs to the PDGF/VEGF growth factor family. As to quaternary structure, homodimer; disulfide-linked. Interacts with PDGFRA homodimers, and with heterodimers formed by PDGFRA and PDGFRB. In terms of processing, proteolytic removal of the N-terminal CUB domain releasing the core domain is necessary for unmasking the receptor-binding epitopes of the core domain. Cleavage after basic residues in the hinge region (region connecting the CUB and growth factor domains) gives rise to the receptor-binding form.

The protein resides in the secreted. Growth factor that plays an essential role in the regulation of embryonic development, cell proliferation, cell migration, survival and chemotaxis. Potent mitogen and chemoattractant for cells of mesenchymal origin. Required for normal skeleton formation during embryonic development. Required for normal skin morphogenesis during embryonic development. Plays an important role in wound healing, in angiogenesis and blood vessel development. This chain is Platelet-derived growth factor C (PDGFC), found in Gekko japonicus (Schlegel's Japanese gecko).